A 316-amino-acid chain; its full sequence is MTAADWRRTLNPQEQREVRELVGAATEFDAVAPVGEQVLRELGHDRTEHLLIRGSVSGGAADAVVGYLNLTPPRDAQPQMAELVVHPRARRRGIGSALARAALAKTGAANRFWAHGTLEPARATAAALGLSPVRELMQMRRSLRDLPDSVPAVPGVRIRTYAGLADDAELLRVNNAAFAYHPEQGGWTDVELAERRAEPWFDPAGLFLAFGDDDSDRPGRLLGFHWTKVHLDQPGLGEVYVVGVDPCAQGRGLGQALTAVGIEWLARRLGAGDSAADPTVMLYVEADNVAAVRTYQRLGFTTYSVDTAYAVPPAAN.

2 consecutive N-acetyltransferase domains span residues 16–153 and 156–316; these read REVR…VPAV and VRIR…PAAN. Position 36 (Glu-36) interacts with 1D-myo-inositol 2-(L-cysteinylamino)-2-deoxy-alpha-D-glucopyranoside. Residues 83 to 85 and 91 to 96 each bind acetyl-CoA; these read LVV and RRGIGS. 1D-myo-inositol 2-(L-cysteinylamino)-2-deoxy-alpha-D-glucopyranoside is bound by residues Glu-183, Lys-228, and Glu-238. Acetyl-CoA is bound by residues 242–244 and 249–255; these read VGV and QGRGLGQ. Tyr-283 provides a ligand contact to 1D-myo-inositol 2-(L-cysteinylamino)-2-deoxy-alpha-D-glucopyranoside. 288-293 serves as a coordination point for acetyl-CoA; that stretch reads NVAAVR.

The protein belongs to the acetyltransferase family. MshD subfamily. Monomer.

It carries out the reaction 1D-myo-inositol 2-(L-cysteinylamino)-2-deoxy-alpha-D-glucopyranoside + acetyl-CoA = mycothiol + CoA + H(+). Catalyzes the transfer of acetyl from acetyl-CoA to desacetylmycothiol (Cys-GlcN-Ins) to form mycothiol. This Mycobacterium avium (strain 104) protein is Mycothiol acetyltransferase.